The sequence spans 259 residues: Flap endonuclease Xni (259 aa).

Aspartate 109 is a binding site for Mg(2+). The 91-residue stretch at 165-255 (LKPEQLADYW…FNLQDIRYEK (91 aa)) folds into the 5'-3' exonuclease domain. Residues leucine 176, alanine 177, isoleucine 187, and valine 190 each contribute to the K(+) site. Residues 189–194 (GVGPKA) are interaction with DNA.

This sequence belongs to the Xni family. Mg(2+) is required as a cofactor. K(+) serves as cofactor.

Has flap endonuclease activity. During DNA replication, flap endonucleases cleave the 5'-overhanging flap structure that is generated by displacement synthesis when DNA polymerase encounters the 5'-end of a downstream Okazaki fragment. The sequence is that of Flap endonuclease Xni from Aliivibrio fischeri (strain ATCC 700601 / ES114) (Vibrio fischeri).